The chain runs to 146 residues: Large ribosomal subunit protein uL15 (146 aa).

The disordered stretch occupies residues 1 to 54 (MTLRLNELAPAEGAKREHRRLGRGIGSGVGKTGGRGIKGQKSRKSGGVRPGFEG). Over residues 23-37 (RGIGSGVGKTGGRGI) the composition is skewed to gly residues.

This sequence belongs to the universal ribosomal protein uL15 family. As to quaternary structure, part of the 50S ribosomal subunit.

Its function is as follows. Binds to the 23S rRNA. The sequence is that of Large ribosomal subunit protein uL15 from Acinetobacter baumannii (strain SDF).